The following is an 841-amino-acid chain: Probable alpha-glucuronidase A (841 aa).

Positions 1–19 (MLRLPLVLVWSLWASLTVA) are cleaved as a signal peptide. N-linked (GlcNAc...) asparagine glycans are attached at residues Asn-50, Asn-104, Asn-223, Asn-280, Asn-311, Asn-344, Asn-466, Asn-528, Asn-577, Asn-683, Asn-724, and Asn-733.

It belongs to the glycosyl hydrolase 67 family.

It localises to the secreted. It catalyses the reaction an alpha-D-glucuronoside + H2O = D-glucuronate + an alcohol. Alpha-glucuronidase involved in the hydrolysis of xylan, a major structural heterogeneous polysaccharide found in plant biomass representing the second most abundant polysaccharide in the biosphere, after cellulose. Releases 4-O-methylglucuronic acid from xylan. This is Probable alpha-glucuronidase A (aguA) from Aspergillus terreus (strain NIH 2624 / FGSC A1156).